The chain runs to 164 residues: Kunitz-type trypsin inhibitor BrTI (164 aa).

It belongs to the leguminous Kunitz-type inhibitor family.

In terms of biological role, inhibitor of trypsin and human plasma kallikrein with a Ki of 2.9 nM and 14.0 nM, respectively. Does not inhibit chymotrypsin, porcine pancreatic elastas, human neutrophil elastase, coagulation factor Xa, human thrombin, porcine pancreatic kallikrein or plasmin. This is Kunitz-type trypsin inhibitor BrTI from Bauhinia rufa (Orchid tree).